Here is a 230-residue protein sequence, read N- to C-terminus: Methyltransferase aurB (230 aa).

This sequence belongs to the methyltransferase superfamily.

It functions in the pathway polyketide biosynthesis. Its function is as follows. Methyltransferase; part of the gene cluster that mediates the biosynthesis of aurovertins, fungal polyketides that exhibit potent inhibition of adenosine triphosphate synthase. Tha biosynthesis starts with the HR-PKS aurA that selects propionate as the starter unit; synthesizes a hexa-ene chain through the repeated functions of the KR and DH domains in the first six iterations; selectively introduces three alpha-methyl substitutions at C4, C6, and C16 using the S-adensylmethionine-dependent cMET; and shuts off KR and DH in the last three iterations to afford a 1,3,5-triketo portion that can undergo intramolecular cyclization to yield the alpha-pyrone intermediate. AurE may act as a cyclase and enhances the rate of pyrone formation and product release of aurA. The methyltransferase aurB then methylates the C17 hydroxyl group. C17 methylation is required to initiate epoxidation by the downstream monooxygenase aurC. The monooxygenase aurC and the epoxide hydrolase aurD can iteratively transform the terminal triene portion of the methylated precursor into the dioxabicyclo[3.2.1]octane scaffold of aurovertin E. Epoxidation modifications of the precursor occur in two separate steps; bis-epoxidation of the two terminal olefins takes place first, followed by another epoxidation that occurs at C7-C8 after tetrahydrofuran formation. The O-acyltransferase aurG converts aurovertin E to aurovertin A. In Calcarisporium arbuscula (Dendryphion arbuscula), this protein is Methyltransferase aurB.